The primary structure comprises 554 residues: (+)-delta-cadinene synthase isozyme XC1 (554 aa).

The span at 1–16 (MASQVSQMPSSSPLSS) shows a compositional bias: low complexity. Positions 1–23 (MASQVSQMPSSSPLSSNKDEMRP) are disordered. Residues Asp307, Asp311, Asp451, and Glu455 each coordinate Mg(2+). Positions 307–311 (DDTYD) match the DDXXD motif motif.

This sequence belongs to the terpene synthase family. Mg(2+) serves as cofactor.

It catalyses the reaction (2E,6E)-farnesyl diphosphate = (1S,8aR)-delta-cadinene + diphosphate. The protein operates within secondary metabolite biosynthesis; terpenoid biosynthesis. Its function is as follows. Responsible for the cyclization of trans,trans-farnesyl diphosphate (FPP) to (+)-delta cadinene. This Gossypium arboreum (Tree cotton) protein is (+)-delta-cadinene synthase isozyme XC1.